The sequence spans 946 residues: Histone-lysine N-methyltransferase, H3 lysine-79 specific (946 aa).

Basic and acidic residues predominate over residues 1-18 (MSEADAGARDESPSRTAE). Residues 1-28 (MSEADAGARDESPSRTAEEPAAAMRIKE) form a disordered region. In terms of domain architecture, DOT1 spans 54–369 (QGKTLRLPGN…KLIKYYEDQR (316 aa)). Residues 173 to 176 (YGET), 196 to 205 (FVDLGSGIGQ), glutamate 223, and 259 to 260 (DF) contribute to the S-adenosyl-L-methionine site. A compositionally biased stretch (basic and acidic residues) spans 368-409 (QRRRQEVKSSREGSEISDGRDMGLKKRKSQRESSVHPDKLQK). Disordered stretches follow at residues 368 to 577 (QRRR…HGGG) and 849 to 905 (PTAS…GATE). Over residues 410 to 422 (TEQAAASSHQSPK) the composition is skewed to polar residues. Residues 464–484 (GKDREKEKEKKKNKIYEEKKV) show a composition bias toward basic and acidic residues. 3 stretches are compositionally biased toward low complexity: residues 491–502 (KSSSSRYSSETP), 512–528 (NSISHSSDVIRPSQPKA), and 855–864 (SKVSPSSSSS). Over residues 880–903 (GAGGGGKRGTSGGRKSDGGGGGGA) the composition is skewed to gly residues.

The protein belongs to the class I-like SAM-binding methyltransferase superfamily. DOT1 family. As to quaternary structure, interacts with zfp-1 (via C-terminus) to form a heterodimer known as the zfp-1-dot-1.1 complex or DotCom complex.

Its subcellular location is the nucleus. The protein resides in the chromosome. It carries out the reaction L-lysyl(79)-[histone H3] + 3 S-adenosyl-L-methionine = N(6),N(6),N(6)-trimethyl-L-lysyl(79)-[histone H3] + 3 S-adenosyl-L-homocysteine + 3 H(+). Histone methyltransferase, which in complex with zfp-1, methylates 'Lys-79' of histone H3 to activate transcription. During stress, the zfp-1-dot-1.1 complex also plays a role in the deubiquitination of histone H2B sites, which negatively modulates the RNA polymerase II-induced transcription of highly expressed genes. Involved in controlling tissue-specific gene expression, particularly in the epidermis. The protein is Histone-lysine N-methyltransferase, H3 lysine-79 specific of Caenorhabditis elegans.